Reading from the N-terminus, the 324-residue chain is MAYVPAPGYQPTYNPTLPYKRPIPGGLSVGMSIYIQGIAKDNMRRFHVNFAVGQDEGADIAFHFNPRFDGWDKVVFNTMQSGQWGKEEKKKSMPFQKGHHFELVFMVMSEHYKVVVNGTPFYEYGHRLPLQMVTHLQVDGDLELQSINFLGGQPAASQYPGTMTIPAYPSAGYNPPQMNSLPVMAGPPIFNPPVPYVGTLQGGLTARRTIIIKGYVLPTAKNLIINFKVGSTGDIAFHMNPRIGDCVVRNSYMNGSWGSEERKIPYNPFGAGQFFDLSIRCGTDRFKVFANGQHLFDFSHRFQAFQRVDMLEIKGDITLSYVQI.

2 consecutive Galectin domains span residues 19–150 (YKRP…INFL) and 196–324 (YVGT…YVQI). Position 257–263 (257–263 (WGSEERK)) interacts with a beta-D-galactoside. Ser259 carries the post-translational modification Phosphoserine.

In terms of assembly, monomer. Highly expressed in full-length form in small and large intestine and stomach but was not detected in other tissues including lung, liver, kidney and spleen.

In terms of biological role, galectin that binds lactose and a related range of sugars. This Rattus norvegicus (Rat) protein is Galectin-4 (Lgals4).